Reading from the N-terminus, the 1055-residue chain is Ephrin type-B receptor 2 (1055 aa).

An N-terminal signal peptide occupies residues Met1–Ala18. The Extracellular portion of the chain corresponds to Val19–Leu543. The 183-residue stretch at Glu20–Gln202 folds into the Eph LBD domain. 2 disulfide bridges follow: Cys62–Cys184 and Cys97–Cys107. 4 N-linked (GlcNAc...) asparagine glycosylation sites follow: Asn265, Asn336, Asn428, and Asn482. Fibronectin type-III domains lie at Ile324 to Ala434 and Ala435 to Glu530. The chain crosses the membrane as a helical span at residues Ile544–Val564. Residues Cys565–Gly1055 lie on the Cytoplasmic side of the membrane. The Protein kinase domain maps to Val621–Ile884. Residues Ile627–Val635 and Lys653 contribute to the ATP site. Residue Asp746 is the Proton acceptor of the active site. Lys891 is covalently cross-linked (Glycyl lysine isopeptide (Lys-Gly) (interchain with G-Cter in ubiquitin)). In terms of domain architecture, SAM spans Thr913–Gln977. A phosphoserine mark is found at Ser983 and Val984. Positions Val984–Gly986 match the PDZ-binding (in isoform 2) motif. The disordered stretch occupies residues Ala990–Gly1055. Positions Arg991–Cys1002 are enriched in basic residues. Positions Lys1025–Asn1049 are enriched in basic and acidic residues.

This sequence belongs to the protein kinase superfamily. Tyr protein kinase family. Ephrin receptor subfamily. In terms of assembly, heterotetramer upon binding of the ligand. The heterotetramer is composed of an ephrin dimer and a receptor dimer. Interacts (via PDZ-binding motif) with GRIP1 and PICK1 (via PDZ domain). Interacts with ARHGEF15; mediates ARHGEF15 phosphorylation, ubiquitination and degradation by the proteasome. Interacts with AQP1; involved in endolymph production in the inner ear. Interacts with SPSB1 and SPSB4. The phosphorylated form interacts with RASA1 (via SH2 domain 1). Interacts with EFNA5. Interacts with SH2D3C. In terms of processing, autophosphorylated; ligand binding stimulates autophosphorylation on tyrosine residues. Post-translationally, polyubiquitinated; ligand binding stimulates ubiquitination. Ubiquitinated by RNF186 at Lys-891, mainly through 'Lys-27'-linked polyubiquitin chains. Ubiquitinated by CRL2(KLHDC2) E3 ligase complex. Ligand binding induces cleavage by matrix metalloproteinases (MMPs) such as MMP7/MMP9, producing an EphB2/N-terminal fragment (NTF) and a C-terminal long fragment (EphB2-LF). EphB2-LF is further cleaved by MMPs, producing EphB2/CTF1 which is further cleaved by the PS1/gamma-secretase producing EphB2/CTF2. Brain, heart, lung, kidney, placenta, pancreas, liver and skeletal muscle. Preferentially expressed in fetal brain.

Its subcellular location is the cell membrane. The protein localises to the cell projection. The protein resides in the axon. It localises to the dendrite. The catalysed reaction is L-tyrosyl-[protein] + ATP = O-phospho-L-tyrosyl-[protein] + ADP + H(+). Its function is as follows. Receptor tyrosine kinase which binds promiscuously transmembrane ephrin-B family ligands residing on adjacent cells, leading to contact-dependent bidirectional signaling into neighboring cells. The signaling pathway downstream of the receptor is referred to as forward signaling while the signaling pathway downstream of the ephrin ligand is referred to as reverse signaling. Functions in axon guidance during development. Involved in the guidance of commissural axons, that form a major interhemispheric connection between the 2 temporal lobes of the cerebral cortex. Also involved in guidance of contralateral inner ear efferent growth cones at the midline and of retinal ganglion cell axons to the optic disk. In addition to axon guidance, also regulates dendritic spines development and maturation and stimulates the formation of excitatory synapses. Upon activation by EFNB1, abolishes the ARHGEF15-mediated negative regulation on excitatory synapse formation. Controls other aspects of development including angiogenesis, palate development and in inner ear development through regulation of endolymph production. Forward and reverse signaling through the EFNB2/EPHB2 complex regulate movement and adhesion of cells that tubularize the urethra and septate the cloaca. May function as a tumor suppressor. May be involved in the regulation of platelet activation and blood coagulation. This Homo sapiens (Human) protein is Ephrin type-B receptor 2 (EPHB2).